The primary structure comprises 697 residues: Transmembrane protein 168 (697 aa).

Helical transmembrane passes span 36-56 (LGYL…YVRW), 63-83 (LILV…ILYY), and 89-109 (AASL…LCFL). N-linked (GlcNAc...) asparagine glycosylation occurs at Asn111. 7 consecutive transmembrane segments (helical) span residues 172–192 (MLVE…MLII), 199–219 (FLAI…SLET), 223–243 (PIAF…DIYF), 265–285 (LSVV…AFKL), 293–313 (FVIP…IIFL), 352–372 (FCLI…ILGA), and 380–400 (GIFL…HGLF). Residues Asn533 and Asn598 are each glycosylated (N-linked (GlcNAc...) asparagine). The chain crosses the membrane as a helical span at residues 646–666 (ITYPLVHLANWLCGLNLFWIC).

Belongs to the TMEM168 family.

It is found in the nucleus membrane. Functionally, plays a key role in maintaining the cardiac electrical stability by modulating cell surface expression of SCN5A. May play a role in the modulation of anxiety behavior by regulating GABAergic neuronal system in the nucleus accumbens. The chain is Transmembrane protein 168 from Homo sapiens (Human).